Consider the following 245-residue polypeptide: uncharacterized protein (245 aa).

This is an uncharacterized protein from Rhodobacter capsulatus (Rhodopseudomonas capsulata).